The primary structure comprises 252 residues: Triosephosphate isomerase (252 aa).

Residue 9–11 (NWK) participates in substrate binding. Catalysis depends on histidine 98, which acts as the Electrophile. Residue glutamate 170 is the Proton acceptor of the active site. The substrate site is built by glycine 176 and serine 215.

The protein belongs to the triosephosphate isomerase family. As to quaternary structure, homodimer.

Its subcellular location is the cytoplasm. It carries out the reaction D-glyceraldehyde 3-phosphate = dihydroxyacetone phosphate. The protein operates within carbohydrate biosynthesis; gluconeogenesis. It participates in carbohydrate degradation; glycolysis; D-glyceraldehyde 3-phosphate from glycerone phosphate: step 1/1. Involved in the gluconeogenesis. Catalyzes stereospecifically the conversion of dihydroxyacetone phosphate (DHAP) to D-glyceraldehyde-3-phosphate (G3P). The chain is Triosephosphate isomerase from Buchnera aphidicola subsp. Baizongia pistaciae (strain Bp).